A 168-amino-acid polypeptide reads, in one-letter code: ATP synthase subunit b (168 aa).

Residues 9–29 form a helical membrane-spanning segment; the sequence is AIPFGTIAYTLVVFLILLVML.

This sequence belongs to the ATPase B chain family. In terms of assembly, F-type ATPases have 2 components, F(1) - the catalytic core - and F(0) - the membrane proton channel. F(1) has five subunits: alpha(3), beta(3), gamma(1), delta(1), epsilon(1). F(0) has three main subunits: a(1), b(2) and c(10-14). The alpha and beta chains form an alternating ring which encloses part of the gamma chain. F(1) is attached to F(0) by a central stalk formed by the gamma and epsilon chains, while a peripheral stalk is formed by the delta and b chains.

It is found in the cell membrane. In terms of biological role, f(1)F(0) ATP synthase produces ATP from ADP in the presence of a proton or sodium gradient. F-type ATPases consist of two structural domains, F(1) containing the extramembraneous catalytic core and F(0) containing the membrane proton channel, linked together by a central stalk and a peripheral stalk. During catalysis, ATP synthesis in the catalytic domain of F(1) is coupled via a rotary mechanism of the central stalk subunits to proton translocation. Functionally, component of the F(0) channel, it forms part of the peripheral stalk, linking F(1) to F(0). In Bacillus cytotoxicus (strain DSM 22905 / CIP 110041 / 391-98 / NVH 391-98), this protein is ATP synthase subunit b.